We begin with the raw amino-acid sequence, 572 residues long: Mitochondrial distribution and morphology protein 34 (572 aa).

The region spanning 1-195 is the SMP-LTD domain; that stretch reads MAFNFNWSPL…LPAIIHRLSL (195 aa). Disordered regions lie at residues 212–236, 321–426, 477–522, and 553–572; these read TASA…VDAL, VGSM…PDND, SATP…DNPT, and CGPF…AYGH. Over residues 330–348 the composition is skewed to low complexity; that stretch reads SASMVSSQSRSSTPSHTFS. The segment covering 358-370 has biased composition (basic residues); sequence RHSKAHARKRKKR. Basic and acidic residues predominate over residues 371 to 381; sequence VVDLRRPKTTD. Polar residues-rich tracts occupy residues 387–400 and 500–511; these read SDES…SAPS and DSSAGSSRQLPS.

Belongs to the MDM34 family. In terms of assembly, component of the ER-mitochondria encounter structure (ERMES) or MDM complex, composed of mmm1, mdm10, mdm12 and mdm34.

The protein localises to the mitochondrion outer membrane. In terms of biological role, component of the ERMES/MDM complex, which serves as a molecular tether to connect the endoplasmic reticulum (ER) and mitochondria. Components of this complex are involved in the control of mitochondrial shape and protein biogenesis, and function in nonvesicular lipid trafficking between the ER and mitochondria. Mdm34 is required for the interaction of the ER-resident membrane protein mmm1 and the outer mitochondrial membrane-resident beta-barrel protein mdm10. The protein is Mitochondrial distribution and morphology protein 34 of Aspergillus fumigatus (strain CBS 144.89 / FGSC A1163 / CEA10) (Neosartorya fumigata).